A 128-amino-acid polypeptide reads, in one-letter code: Large ribosomal subunit protein bL12 (128 aa).

It belongs to the bacterial ribosomal protein bL12 family. Homodimer. Part of the ribosomal stalk of the 50S ribosomal subunit. Forms a multimeric L10(L12)X complex, where L10 forms an elongated spine to which 2 to 4 L12 dimers bind in a sequential fashion. Binds GTP-bound translation factors.

In terms of biological role, forms part of the ribosomal stalk which helps the ribosome interact with GTP-bound translation factors. Is thus essential for accurate translation. The polypeptide is Large ribosomal subunit protein bL12 (Kosmotoga olearia (strain ATCC BAA-1733 / DSM 21960 / TBF 19.5.1)).